A 436-amino-acid chain; its full sequence is Adenylosuccinate synthetase (436 aa).

Residues 13–19 (GDEGKGK) and 41–43 (GHT) contribute to the GTP site. D14 acts as the Proton acceptor in catalysis. Residues D14 and G41 each contribute to the Mg(2+) site. Residues 14–17 (DEGK), 39–42 (NAGH), T131, R145, Q226, T241, and R309 contribute to the IMP site. Catalysis depends on H42, which acts as the Proton donor. 305–311 (TVTGRKR) lines the substrate pocket. Residues R311, 337–339 (KLD), and 419–421 (STG) each bind GTP.

It belongs to the adenylosuccinate synthetase family. As to quaternary structure, homodimer. It depends on Mg(2+) as a cofactor.

It is found in the cytoplasm. It catalyses the reaction IMP + L-aspartate + GTP = N(6)-(1,2-dicarboxyethyl)-AMP + GDP + phosphate + 2 H(+). It functions in the pathway purine metabolism; AMP biosynthesis via de novo pathway; AMP from IMP: step 1/2. Its function is as follows. Plays an important role in the de novo pathway of purine nucleotide biosynthesis. Catalyzes the first committed step in the biosynthesis of AMP from IMP. The chain is Adenylosuccinate synthetase from Aromatoleum aromaticum (strain DSM 19018 / LMG 30748 / EbN1) (Azoarcus sp. (strain EbN1)).